The sequence spans 207 residues: Ribosomal RNA small subunit methyltransferase G (207 aa).

S-adenosyl-L-methionine-binding positions include Gly73, Leu78, 124–125 (VE), and Arg139.

The protein belongs to the methyltransferase superfamily. RNA methyltransferase RsmG family.

The protein localises to the cytoplasm. The catalysed reaction is guanosine(527) in 16S rRNA + S-adenosyl-L-methionine = N(7)-methylguanosine(527) in 16S rRNA + S-adenosyl-L-homocysteine. Functionally, specifically methylates the N7 position of guanine in position 527 of 16S rRNA. This chain is Ribosomal RNA small subunit methyltransferase G, found in Shigella dysenteriae serotype 1 (strain Sd197).